The sequence spans 142 residues: Protein archease (142 aa).

Ca(2+) contacts are provided by Asp12 and Asp141.

The protein belongs to the archease family.

Functionally, activates the tRNA-splicing ligase complex by facilitating the enzymatic turnover of catalytic subunit RtcB. Acts by promoting the guanylylation of RtcB, a key intermediate step in tRNA ligation. Can also alter the NTP specificity of RtcB such that ATP, dGTP or ITP is used efficiently. This Thermococcus kodakarensis (strain ATCC BAA-918 / JCM 12380 / KOD1) (Pyrococcus kodakaraensis (strain KOD1)) protein is Protein archease.